Consider the following 247-residue polypeptide: UPF0280 protein MmarC6_1437 (247 aa).

The protein belongs to the UPF0280 family.

The sequence is that of UPF0280 protein MmarC6_1437 from Methanococcus maripaludis (strain C6 / ATCC BAA-1332).